Reading from the N-terminus, the 53-residue chain is Small polypeptide DEVIL 16 (53 aa).

Asparagine 6 is a glycosylation site (N-linked (GlcNAc...) asparagine). The required for DVL/RTFL small polypeptide activity stretch occupies residues threonine 14–aspartate 45. A helical transmembrane segment spans residues phenylalanine 30–glutamine 46.

Belongs to the DVL/RTFL small polypeptides family. In terms of tissue distribution, mostly expressed in stems, flower buds, flowers and seedling shoots, to a lesser extent, in roots and young cauline leaves, but not in mature rosette leaves. Barely observed in cotyledons and leaf primordia.

Its subcellular location is the cell membrane. Small polypeptide acting as a regulatory molecule which coordinates cellular responses required for differentiation, growth and development, probably by restricting polar cell proliferation in lateral organs (e.g. leaves) and coordinating socket cell recruitment and differentiation at trichome sites. Regulates the positional cue and cell proliferation along the body axis. This is Small polypeptide DEVIL 16 from Arabidopsis thaliana (Mouse-ear cress).